A 144-amino-acid polypeptide reads, in one-letter code: Large ribosomal subunit protein uL16m (144 aa).

This sequence belongs to the universal ribosomal protein uL16 family.

Its subcellular location is the mitochondrion. This is Large ribosomal subunit protein uL16m (mrpl16) from Dictyostelium discoideum (Social amoeba).